A 176-amino-acid chain; its full sequence is Ribosome maturation factor RimM (176 aa).

The PRC barrel domain maps to 97–176 (DSEFYHRDLI…QILVDWDPDF (80 aa)).

It belongs to the RimM family. Binds ribosomal protein uS19.

It is found in the cytoplasm. Functionally, an accessory protein needed during the final step in the assembly of 30S ribosomal subunit, possibly for assembly of the head region. Essential for efficient processing of 16S rRNA. May be needed both before and after RbfA during the maturation of 16S rRNA. It has affinity for free ribosomal 30S subunits but not for 70S ribosomes. The chain is Ribosome maturation factor RimM from Shewanella frigidimarina (strain NCIMB 400).